Reading from the N-terminus, the 375-residue chain is Succinyl-diaminopimelate desuccinylase (375 aa).

Zn(2+) is bound at residue histidine 66. The active site involves aspartate 68. Residue aspartate 99 coordinates Zn(2+). The active-site Proton acceptor is the glutamate 133. Residues glutamate 134, glutamate 162, and histidine 348 each contribute to the Zn(2+) site.

The protein belongs to the peptidase M20A family. DapE subfamily. In terms of assembly, homodimer. The cofactor is Zn(2+). Requires Co(2+) as cofactor.

It catalyses the reaction N-succinyl-(2S,6S)-2,6-diaminopimelate + H2O = (2S,6S)-2,6-diaminopimelate + succinate. It functions in the pathway amino-acid biosynthesis; L-lysine biosynthesis via DAP pathway; LL-2,6-diaminopimelate from (S)-tetrahydrodipicolinate (succinylase route): step 3/3. In terms of biological role, catalyzes the hydrolysis of N-succinyl-L,L-diaminopimelic acid (SDAP), forming succinate and LL-2,6-diaminopimelate (DAP), an intermediate involved in the bacterial biosynthesis of lysine and meso-diaminopimelic acid, an essential component of bacterial cell walls. This Methylobacillus flagellatus (strain ATCC 51484 / DSM 6875 / VKM B-1610 / KT) protein is Succinyl-diaminopimelate desuccinylase.